A 449-amino-acid polypeptide reads, in one-letter code: Xylose isomerase (449 aa).

Active-site residues include His103 and Asp106. Glu234, Glu270, His273, Asp298, Asp309, Asp311, and Asp342 together coordinate Mg(2+).

It belongs to the xylose isomerase family. As to quaternary structure, homotetramer. Mg(2+) serves as cofactor.

It is found in the cytoplasm. It carries out the reaction alpha-D-xylose = alpha-D-xylulofuranose. This Levilactobacillus brevis (Lactobacillus brevis) protein is Xylose isomerase.